We begin with the raw amino-acid sequence, 198 residues long: MLQQIYDFLNINYNVSRETFNKFKEYYSLLSKWNSTINLVSATTLQNFWQRHIFDSIQLLNYIHNKDIIVADLGSGAGFPGVVLSISGIKNVILIESDSRKAAFLLQAAQLSDQKIEIINDRIQNLKVKCDLVTVRALANLSTILSHTKQFTVKDKYLILKGKNYQHEITQALLHNKFNYTLYQSCTDDSSWILEIRI.

Residues Gly74, Phe79, 123-124 (IQ), and Arg136 contribute to the S-adenosyl-L-methionine site.

It belongs to the methyltransferase superfamily. RNA methyltransferase RsmG family.

It localises to the cytoplasm. It catalyses the reaction guanosine(527) in 16S rRNA + S-adenosyl-L-methionine = N(7)-methylguanosine(527) in 16S rRNA + S-adenosyl-L-homocysteine. Specifically methylates the N7 position of guanine in position 527 of 16S rRNA. In Orientia tsutsugamushi (strain Boryong) (Rickettsia tsutsugamushi), this protein is Ribosomal RNA small subunit methyltransferase G.